The primary structure comprises 398 residues: Mu-type opioid receptor (398 aa).

The Extracellular segment spans residues 1 to 66; it reads MDSSTGPGNT…CPQTGSPSMV (66 aa). 5 N-linked (GlcNAc...) asparagine glycosylation sites follow: Asn-9, Asn-31, Asn-38, Asn-46, and Asn-53. A helical membrane pass occupies residues 67-91; that stretch reads TAITIMALYSIVCVVGLFGNFLVMY. The Cytoplasmic portion of the chain corresponds to 92 to 104; the sequence is VIVRYTKMKTATN. A helical transmembrane segment spans residues 105-129; it reads IYIFNLALADALATSTLPFQSVNYL. Over 130–140 the chain is Extracellular; that stretch reads MGTWPFGTILC. Residues Cys-140 and Cys-217 are joined by a disulfide bond. The chain crosses the membrane as a helical span at residues 141-163; the sequence is KIVISIDYYNMFTSIFTLCTMSV. Residues 164–183 are Cytoplasmic-facing; that stretch reads DRYIAVCHPVKALDFRTPRN. Tyr-166 is subject to Phosphotyrosine. Residues 184–205 form a helical membrane-spanning segment; sequence AKIVNVCNWILSSAIGLPVMFM. Residues 206–228 are Extracellular-facing; sequence ATTKYRQGSIDCTLTFSHPTWYW. Residues 229-253 form a helical membrane-spanning segment; that stretch reads ENLLKICVFIFAFIMPVLIITVCYG. Residues 254–277 lie on the Cytoplasmic side of the membrane; that stretch reads LMILRLKSVRMLSGSKEKDRNLRR. Residues 278 to 304 form a helical membrane-spanning segment; it reads ITRMVLVVVAVFIVCWTPIHIYVIIKA. Residues 305 to 312 are Extracellular-facing; the sequence is LITIPETT. The chain crosses the membrane as a helical span at residues 313-336; that stretch reads FQTVSWHFCIALGYTNSCLNPVLY. An NPxxY; plays a role in stabilizing the activated conformation of the receptor motif is present at residues 332–336; it reads NPVLY. Residues 337–398 lie on the Cytoplasmic side of the membrane; sequence AFLDENFKRC…NLEAETAPLP (62 aa). A lipid anchor (S-palmitoyl cysteine) is attached at Cys-351. Residues 361 to 385 form a disordered region; it reads QNSTRVRQNTREHPSTANTVDRTNH. Ser-363 carries the post-translational modification Phosphoserine. Thr-370 carries the post-translational modification Phosphothreonine. At Ser-375 the chain carries Phosphoserine. Thr-394 bears the Phosphothreonine mark.

This sequence belongs to the G-protein coupled receptor 1 family. As to quaternary structure, forms homooligomers and heterooligomers with other GPCRs, such as OPRD1, OPRK1, OPRL1, NPFFR2, ADRA2A, SSTR2, CNR1 and CCR5 (probably in dimeric forms). Interacts with heterotrimeric G proteins; interaction with a heterotrimeric complex containing GNAI1, GNB1 and GNG2 stabilizes the active conformation of the receptor and increases its affinity for endomorphin-2, the synthetic opioid peptide DAMGO and for morphinan agonists. Interacts with PPL; the interaction disrupts agonist-mediated G-protein activation. Interacts (via C-terminus) with DNAJB4 (via C-terminus). Interacts with calmodulin; the interaction inhibits the constitutive activity of OPRM1; it abolishes basal and attenuates agonist-stimulated G-protein coupling. Interacts with FLNA, PLD2, RANBP9 and WLS and GPM6A. Interacts with RTP4. Interacts with SYP and GNAS. Interacts with RGS9, RGS17, RGS20, RGS4, PPP1R9B and HINT1. Phosphorylated. Differentially phosphorylated in basal and agonist-induced conditions. Agonist-mediated phosphorylation modulates receptor internalization. Phosphorylated by GRK2 in a agonist-dependent manner. Phosphorylation at Tyr-166 requires receptor activation, is dependent on non-receptor protein tyrosine kinase Src and results in a decrease in agonist efficacy by reducing G-protein coupling efficiency. Phosphorylated on tyrosine residues; the phosphorylation is involved in agonist-induced G-protein-independent receptor down-regulation. Phosphorylation at Ser-375 is involved in G-protein-dependent but not beta-arrestin-dependent activation of the ERK pathway. Post-translationally, ubiquitinated. A basal ubiquitination seems not to be related to degradation. Ubiquitination is increased upon formation of OPRM1:OPRD1 oligomers leading to proteasomal degradation; the ubiquitination is diminished by RTP4. In terms of tissue distribution, brain. Is expressed in the cerebral cortex, caudate putamen, nucleus accumbens, septal nuclei, thalamus, hippocampus, and habenula. Not detected in cerebellum.

Its subcellular location is the cell membrane. It is found in the cell projection. It localises to the axon. The protein localises to the perikaryon. The protein resides in the dendrite. Its subcellular location is the endosome. Functionally, receptor for endogenous opioids such as beta-endorphin and endomorphin. Receptor for natural and synthetic opioids including morphine, heroin, DAMGO, fentanyl, etorphine, buprenorphin and methadone. Also activated by enkephalin peptides, such as Met-enkephalin or Met-enkephalin-Arg-Phe, with higher affinity for Met-enkephalin-Arg-Phe. Agonist binding to the receptor induces coupling to an inactive GDP-bound heterotrimeric G-protein complex and subsequent exchange of GDP for GTP in the G-protein alpha subunit leading to dissociation of the G-protein complex with the free GTP-bound G-protein alpha and the G-protein beta-gamma dimer activating downstream cellular effectors. The agonist- and cell type-specific activity is predominantly coupled to pertussis toxin-sensitive G(i) and G(o) G alpha proteins, GNAI1, GNAI2, GNAI3 and GNAO1 isoforms Alpha-1 and Alpha-2, and to a lesser extent to pertussis toxin-insensitive G alpha proteins GNAZ and GNA15. They mediate an array of downstream cellular responses, including inhibition of adenylate cyclase activity and both N-type and L-type calcium channels, activation of inward rectifying potassium channels, mitogen-activated protein kinase (MAPK), phospholipase C (PLC), phosphoinositide/protein kinase (PKC), phosphoinositide 3-kinase (PI3K) and regulation of NF-kappa-B. Also couples to adenylate cyclase stimulatory G alpha proteins. The selective temporal coupling to G-proteins and subsequent signaling can be regulated by RGSZ proteins, such as RGS9, RGS17 and RGS4. Phosphorylation by members of the GPRK subfamily of Ser/Thr protein kinases and association with beta-arrestins is involved in short-term receptor desensitization. Beta-arrestins associate with the GPRK-phosphorylated receptor and uncouple it from the G-protein thus terminating signal transduction. The phosphorylated receptor is internalized through endocytosis via clathrin-coated pits which involves beta-arrestins. The activation of the ERK pathway occurs either in a G-protein-dependent or a beta-arrestin-dependent manner and is regulated by agonist-specific receptor phosphorylation. Acts as a class A G-protein coupled receptor (GPCR) which dissociates from beta-arrestin at or near the plasma membrane and undergoes rapid recycling. Receptor down-regulation pathways are varying with the agonist and occur dependent or independent of G-protein coupling. Endogenous ligands induce rapid desensitization, endocytosis and recycling. Heterooligomerization with other GPCRs can modulate agonist binding, signaling and trafficking properties. This chain is Mu-type opioid receptor (Oprm1), found in Rattus norvegicus (Rat).